Here is an 831-residue protein sequence, read N- to C-terminus: Prickle-like protein 1 (831 aa).

In terms of domain architecture, PET spans 14–122 (FGCQRSSTSD…TIKLLSRAVM (109 aa)). 3 LIM zinc-binding domains span residues 124-189 (AVCE…LLKP), 189-249 (PRCS…LYAE), and 249-313 (EYCE…EDVH). Residues 313–342 (HASDSSDSAFQSARSRDSRRSVRMGKSSRS) form a disordered region. Phosphoserine occurs at positions 315, 591, and 594. 2 disordered regions span residues 663-688 (FEER…NALN) and 763-831 (CSSS…CIIS). The span at 669-680 (RSHHHRRRRSRK) shows a compositional bias: basic residues. At Ser-683 the chain carries Phosphoserine. Positions 815 to 831 (TKSKKKKGHKGKNCIIS) are enriched in basic residues. Position 828 is a cysteine methyl ester (Cys-828). Cys-828 is lipidated: S-farnesyl cysteine. Positions 829-831 (IIS) are cleaved as a propeptide — removed in mature form.

This sequence belongs to the prickle / espinas / testin family. As to quaternary structure, interacts with REST. As to expression, expressed at highest levels in placenta and at lower levels in lung, liver, kidney and pancreas. Expressed in thalamus, hippocampus, cerebral cortex, and cerebellum (in neurons rather than glia).

It is found in the nucleus membrane. It localises to the cytoplasm. Its subcellular location is the cytosol. Its function is as follows. Involved in the planar cell polarity pathway that controls convergent extension during gastrulation and neural tube closure. Convergent extension is a complex morphogenetic process during which cells elongate, move mediolaterally, and intercalate between neighboring cells, leading to convergence toward the mediolateral axis and extension along the anteroposterior axis. Necessary for nuclear localization of REST. May serve as nuclear receptor. In Homo sapiens (Human), this protein is Prickle-like protein 1 (PRICKLE1).